Reading from the N-terminus, the 103-residue chain is Large ribosomal subunit protein bL21 (103 aa).

It belongs to the bacterial ribosomal protein bL21 family. As to quaternary structure, part of the 50S ribosomal subunit. Contacts protein L20.

This protein binds to 23S rRNA in the presence of protein L20. The protein is Large ribosomal subunit protein bL21 of Herminiimonas arsenicoxydans.